The chain runs to 259 residues: MKHFLRALKRCSVAVATVAIAVVGLQPVTASAAPNPVVGGTRAAQGEFPFMVRLSMGCGGALYAQDIVLTAAHCVSGSGNNTSITATGGVVDLQSSSAVKVRSTKVLQAPGYNGTGKDWALIKLAQPINQPTLKIATTTAYNQGTFTVAGWGANREGGSQQRYLLKANVPFVSDAACRSAYGNELVANEEICAGYPDTGGVDTCQGDSGGPMFRKDNADEWIQVGIVSWGYGCARPGYPGVYTEVSTFASAIASAARTL.

An N-terminal signal peptide occupies residues 1–32 (MKHFLRALKRCSVAVATVAIAVVGLQPVTASA). Positions 33-36 (APNP) are cleaved as a propeptide — activation peptide. The region spanning 37 to 257 (VVGGTRAAQG…FASAIASAAR (221 aa)) is the Peptidase S1 domain. A disulfide bridge links C58 with C74. Residues H73 and D118 each act as charge relay system in the active site. Intrachain disulfides connect C177–C192 and C204–C233. The active-site Charge relay system is the S208.

It belongs to the peptidase S1 family.

It catalyses the reaction Preferential cleavage: Arg-|-Xaa, Lys-|-Xaa.. This Streptomyces griseus protein is Trypsin (sprT).